A 1101-amino-acid chain; its full sequence is MTATRLVRAHPESSHRWVPAAAGWIVGVIATLSLLASVSPLVRSIIRVPREFVDDYIFNFPDTSFAWAFVLALLAAALAARKRIAWWILTGYMVAAAVWNVTGLLDGDRWFEDVGEIIGLGFHLAAIASLLLARREFWARVRPGALVKAAVTLVAGLGVGTLIGWGLLELFPGTLARPDRFWYALNRVGAFAGADAGAFSGHPHVLVNALLGLFGAMALMIAAVVLFQSQRADNALTGEDESAIRGLLELYGKNDSLGYFATRRDKAVVFAPNGRAAITYRVEVGVCLASGDPVGDPKAWPQAIEAWLTLCETYGWAPGVMGASATGAQAFRQAGLHALQLGDEAILHPDDFRLSGPEMRAVRQAVTRARRAGVAVRFRRHRELSPDEMAEVIAHADAWRDTEDERGFSMALGRLGDPADADCLLVEAVQNGTQVVAMLSLVPWGSNGVSLDLMRRAPQSPNGTIELMVSELCLQSESIGISRISLNFAMFRSAFEQGAQLGAGPVARLWRWLLVFFSRWWQLETLYRSNMKYQPEWVPRYACYEDARLVPRVGVASVIAEGFLVLPFSRRHDQPHTGHHIAAPGDLIATGRLHSDGTAPDRIGPVGDGADDDAAPRLPEQVRVRMAKLSALQDRGVDAYPVGSPPSHTIAEAIAAEEGTEVTVSGRVLRARDYGGVLFGQLRDWSAETQVALDNSALLDGTTTDFTRTVDLGDLIEVTGTMGHTRSGSWSVLVTRWRLIGKCLRPLPDKWKGLTDQEARVRARYVDLAVNTDARELIKARSAILHAIRETLVGKGFLEVETPILQQIHGGANARPFLTHINAYDLDLYLRIAPELYLKRLCVGGVERVFELGRAFRNEGVDFSHNPEFTLLEAYQAHADYTVWIDGCRELIQNAAMAANGSHVFFRPREDGVLEPVDISGRWAVKTVHGAVSEALGEHIDVDTDLATLRRLCDKAGIPYLTHWDAGAVVLEMYEHLVEDQTTEPTFYKDFPTSVSPLTRPHRSIPGVAERWDLVAWGVELGTAYSELTDPVEQRRRLQEQSLLAAGGDPEAMELDEDFLQAMEYAMPPTGGLGMGVDRVVMLITGRSIRETLPFPLAKPR.

A phosphatidylglycerol lysyltransferase region spans residues 1–601; the sequence is MTATRLVRAH…RLHSDGTAPD (601 aa). 7 helical membrane-spanning segments follow: residues 18–38, 60–80, 84–104, 113–133, 151–171, 183–200, and 207–227; these read VPAAAGWIVGVIATLSLLASV, FPDTSFAWAFVLALLAAALAA, IAWWILTGYMVAAAVWNVTGL, DVGEIIGLGFHLAAIASLLLA, VTLVAGLGVGTLIGWGLLELF, YALNRVGAFAGADAGAFS, and VNALLGLFGAMALMIAAVVLF. The interval 602 to 1101 is lysine--tRNA ligase; the sequence is RIGPVGDGAD…TLPFPLAKPR (500 aa). A DNA-binding region (OB) is located at residues 662–740; it reads VTVSGRVLRA…SVLVTRWRLI (79 aa). Mg(2+) contacts are provided by Asp-1013 and Glu-1020.

In the N-terminal section; belongs to the LPG synthetase family. The protein in the C-terminal section; belongs to the class-II aminoacyl-tRNA synthetase family. Mg(2+) serves as cofactor.

Its subcellular location is the cell membrane. The catalysed reaction is tRNA(Lys) + L-lysine + ATP = L-lysyl-tRNA(Lys) + AMP + diphosphate. The enzyme catalyses L-lysyl-tRNA(Lys) + a 1,2-diacyl-sn-glycero-3-phospho-(1'-sn-glycerol) = a 1,2-diacyl-sn-glycero-3-phospho-1'-(3'-O-L-lysyl)-sn-glycerol + tRNA(Lys). Its function is as follows. Catalyzes the production of L-lysyl-tRNA(Lys)transfer and the transfer of a lysyl group from L-lysyl-tRNA(Lys) to membrane-bound phosphatidylglycerol (PG), which produces lysylphosphatidylglycerol (LPG), one of the components of the bacterial membrane with a positive net charge. LPG synthesis contributes to the resistance to cationic antimicrobial peptides (CAMPs) and likely protects M.tuberculosis against the CAMPs produced by competiting microorganisms (bacteriocins). In fact, the modification of anionic phosphatidylglycerol with positively charged L-lysine results in repulsion of the peptides. The sequence is that of Lysylphosphatidylglycerol biosynthesis bifunctional protein LysX (lysX) from Mycolicibacterium gilvum (strain PYR-GCK) (Mycobacterium gilvum (strain PYR-GCK)).